The primary structure comprises 1238 residues: uncharacterized protein (1238 aa).

Disordered regions lie at residues 1–38, 122–156, 229–439, 660–1016, 1051–1083, and 1098–1191; these read MSSK…DISS, SSTP…RPSF, PKNN…KNKE, KNKL…TGAA, EEED…KLNS, and KKSG…NASR. 3 stretches are compositionally biased toward low complexity: residues 10–26, 129–149, and 234–276; these read NKNN…NNNN, LSPF…QSPL, and QIDS…TQSQ. Over residues 317-343 the composition is skewed to polar residues; sequence ELQNQTQINKSKQDLTNISQKINITTS. Basic and acidic residues predominate over residues 344–361; the sequence is QHDKDDLGEYRMSEKGGG. Over residues 362–372 the composition is skewed to acidic residues; sequence DDGDDDDDYDN. The span at 383 to 394 shows a compositional bias: basic residues; the sequence is TNKKQQQQHHHK. Positions 395–416 are enriched in basic and acidic residues; that stretch reads GKEESQSEYYEKEKEKEKEDIA. 3 stretches are compositionally biased toward low complexity: residues 417–435, 678–691, and 712–792; these read TTRA…NNIN, QQQQ…QQQE, and QPSQ…QEKQ. The segment covering 793–805 has biased composition (basic and acidic residues); it reads QSQEKHQSQEKHQ. Low complexity-rich tracts occupy residues 806–859 and 882–906; these read SQQS…SQQK and SQSQ…QSQR. Residues 916–927 are compositionally biased toward acidic residues; that stretch reads ENQDSENLDDTV. Positions 929–944 are enriched in polar residues; that stretch reads MNYNQIPSTLDHSTLQ. The segment covering 966–975 has biased composition (basic and acidic residues); the sequence is EIERRRRELA. The span at 976–990 shows a compositional bias: acidic residues; that stretch reads GEDSDEEFEILDEDQ. Composition is skewed to low complexity over residues 1062–1083 and 1108–1121; these read QNNN…KLNS and SSSS…NKKN. Residues 1123 to 1133 are compositionally biased toward polar residues; the sequence is PQPTKSVNKPR. The segment covering 1142-1181 has biased composition (low complexity); that stretch reads SQNRQKQSEQQQQQPQQQPQLPQQQQQQQQQQQLRQQQNE. A compositionally biased stretch (polar residues) spans 1182-1191; that stretch reads NTISSLNASR.

This is an uncharacterized protein from Dictyostelium discoideum (Social amoeba).